The chain runs to 463 residues: Abscisic acid 8'-hydroxylase 3 (463 aa).

The chain crosses the membrane as a helical span at residues 6–26 (LFLTLSAAALFLCLLRFIAGV). Cys-411 contributes to the heme binding site.

It belongs to the cytochrome P450 family. Heme serves as cofactor. As to expression, mainly expressed in flower buds, flowers, rosette leaves and roots. Lower expression in mature siliques and inflorescence stems. Not expressed in dry seeds.

Its subcellular location is the membrane. The catalysed reaction is 2-cis-(+)-abscisate + reduced [NADPH--hemoprotein reductase] + O2 = (+)-8'-hydroxyabscisate + oxidized [NADPH--hemoprotein reductase] + H2O + H(+). The protein operates within plant hormone degradation; abscisic acid degradation. Inhibited by tetcyclcis, but not by metyrapone. Functionally, involved in the oxidative degradation of abscisic acid, but not in the isomerization of the produced 8'-hydroxyabscisic acid (8'-OH-ABA) to (-)-phaseic acid (PA). Involved in the control of postgermination growth. The polypeptide is Abscisic acid 8'-hydroxylase 3 (CYP707A3) (Arabidopsis thaliana (Mouse-ear cress)).